A 562-amino-acid chain; its full sequence is Formate--tetrahydrofolate ligase (562 aa).

70–77 contacts ATP; it reads TPAGEGKS.

This sequence belongs to the formate--tetrahydrofolate ligase family.

It catalyses the reaction (6S)-5,6,7,8-tetrahydrofolate + formate + ATP = (6R)-10-formyltetrahydrofolate + ADP + phosphate. The protein operates within one-carbon metabolism; tetrahydrofolate interconversion. This is Formate--tetrahydrofolate ligase from Paenarthrobacter aurescens (strain TC1).